The following is a 361-amino-acid chain: MNLFIYVLLLSIWTSSCLDRNESNGSATAVTTHAEFKQTKLQELRRRLLIIVIGTLITGYMVSCTCLLHYSCDSEEAHTAAKDKKEDITIKASRSSKISFTDSKSPTAGLGDPERQSVVSRIDKSSGPSSPRKVPSSAEKLVRPSSQKKPSKPSAPKKVLGSPPQEKLHRTRSPKKAHRQAHAHKPVSQVSPSYPEKAIKSTWPPSLQCRAKPTKTPLPYPKNQSFPEQSSVDKLTKRQRYLKLKCPASAGRAEILSRPHPVKFCRCYKEKCLVCRAVSEPFITHVSDANKKHVPVPLFSRELKHFYKSYKKKQPKYNTLYGNMSDSDITTYNSDGESDREVIIMCNIKCKEDIYKNSRNN.

The signal sequence occupies residues 1–17 (MNLFIYVLLLSIWTSSC). Residues 18-47 (LDRNESNGSATAVTTHAEFKQTKLQELRRR) lie on the Extracellular side of the membrane. N-linked (GlcNAc...) asparagine glycosylation is present at Asn-24. The helical transmembrane segment at 48-68 (LLIIVIGTLITGYMVSCTCLL) threads the bilayer. The Cytoplasmic portion of the chain corresponds to 69–361 (HYSCDSEEAH…EDIYKNSRNN (293 aa)). Positions 95–106 (SSKISFTDSKSP) are enriched in polar residues. The segment at 95 to 197 (SSKISFTDSK…SQVSPSYPEK (103 aa)) is disordered. Positions 144–158 (PSSQKKPSKPSAPKK) are enriched in low complexity. A compositionally biased stretch (basic residues) spans 169 to 185 (HRTRSPKKAHRQAHAHK).

It localises to the membrane. This is an uncharacterized protein from Bos taurus (Bovine).